Reading from the N-terminus, the 602-residue chain is Arp2/3 complex-activating protein rickA (602 aa).

Disordered stretches follow at residues serine 307–lysine 484, valine 516–glutamine 535, and methionine 555–lysine 602. A compositionally biased stretch (pro residues) spans threonine 318–alanine 442. WH2 domains lie at aspartate 472 to valine 489 and serine 499 to valine 516. Over residues aspartate 475–lysine 484 the composition is skewed to basic and acidic residues. The interval valine 537–aspartate 570 is central and acidic domains. The span at methionine 555 to glycine 566 shows a compositional bias: low complexity. Basic residues predominate over residues lysine 578–leucine 590. A compositionally biased stretch (polar residues) spans asparagine 591–lysine 602.

In terms of assembly, homodimer.

It localises to the cell surface. In terms of biological role, recruits and activates the Arp2/3 complex, which in turn leads to actin polymerization, promoting Rickettsia motility during infection. This is Arp2/3 complex-activating protein rickA (rickA) from Rickettsia montanensis.